The chain runs to 294 residues: Shikimate dehydrogenase (NADP(+)) (294 aa).

Shikimate is bound by residues 22 to 24 (SLS) and Ser-69. The active-site Proton acceptor is Lys-73. Shikimate is bound by residues Asn-94 and Asp-111. Residues 135-139 (GAGGA) and Leu-236 each bind NADP(+). Tyr-238 is a binding site for shikimate. Gly-260 is a binding site for NADP(+).

This sequence belongs to the shikimate dehydrogenase family. As to quaternary structure, homodimer.

It catalyses the reaction shikimate + NADP(+) = 3-dehydroshikimate + NADPH + H(+). It functions in the pathway metabolic intermediate biosynthesis; chorismate biosynthesis; chorismate from D-erythrose 4-phosphate and phosphoenolpyruvate: step 4/7. Involved in the biosynthesis of the chorismate, which leads to the biosynthesis of aromatic amino acids. Catalyzes the reversible NADPH linked reduction of 3-dehydroshikimate (DHSA) to yield shikimate (SA). This Streptococcus equi subsp. zooepidemicus (strain H70) protein is Shikimate dehydrogenase (NADP(+)).